The following is a 95-amino-acid chain: Aspartyl/glutamyl-tRNA(Asn/Gln) amidotransferase subunit C (95 aa).

It belongs to the GatC family. In terms of assembly, heterotrimer of A, B and C subunits.

The enzyme catalyses L-glutamyl-tRNA(Gln) + L-glutamine + ATP + H2O = L-glutaminyl-tRNA(Gln) + L-glutamate + ADP + phosphate + H(+). It catalyses the reaction L-aspartyl-tRNA(Asn) + L-glutamine + ATP + H2O = L-asparaginyl-tRNA(Asn) + L-glutamate + ADP + phosphate + 2 H(+). Allows the formation of correctly charged Asn-tRNA(Asn) or Gln-tRNA(Gln) through the transamidation of misacylated Asp-tRNA(Asn) or Glu-tRNA(Gln) in organisms which lack either or both of asparaginyl-tRNA or glutaminyl-tRNA synthetases. The reaction takes place in the presence of glutamine and ATP through an activated phospho-Asp-tRNA(Asn) or phospho-Glu-tRNA(Gln). This Chlorobium chlorochromatii (strain CaD3) protein is Aspartyl/glutamyl-tRNA(Asn/Gln) amidotransferase subunit C.